A 378-amino-acid polypeptide reads, in one-letter code: MLQRCGRRLLLALVGALLACLLVLTADPPPTPMPAERGRRALRSLAGSSGGAPASGSRAAVDPGVLTREVHSLSEYFSLLTRARRDADPPPGVASRQGDGHPRPPAEVLSPRDVFIAVKTTRKFHRARLDLLFETWISRHKEMTFIFTDGEDEALAKLTGNVVLTNCSSAHSRQALSCKMAVEYDRFIESGKKWFCHVDDDNYVNLRALLRLLASYPHTQDVYIGKPSLDRPIQATERISEHKVRPVHFWFATGGAGFCISRGLALKMGPWASGGHFMSTAERIRLPDDCTIGYIVEALLGVPLIRSGLFHSHLENLQQVPTTELHEQVTLSYGMFENKRNAVHIKGPFSVEADPSRFRSVHCHLYPDTPWCPRSAIF.

Residues Met-1–Arg-8 are Cytoplasmic-facing. The helical; Signal-anchor for type II membrane protein transmembrane segment at Leu-9–Pro-29 threads the bilayer. Residues Pro-30–Phe-378 lie on the Lumenal side of the membrane. The interval Arg-85 to Val-108 is disordered. Arg-128 contacts substrate. Asn-166 is a glycosylation site (N-linked (GlcNAc...) asparagine). 2 cysteine pairs are disulfide-bonded: Cys-167/Cys-178 and Cys-196/Cys-259. Position 200 (Asp-200) interacts with substrate. Residue Asp-201 coordinates Mn(2+). The active site involves Asp-289. His-313 is a Mn(2+) binding site. Cys-363 and Cys-372 are joined by a disulfide.

The protein belongs to the glycosyltransferase 31 family. Requires Mn(2+) as cofactor. It depends on Co(2+) as a cofactor. Post-translationally, a soluble form may be derived from the membrane form by proteolytic processing. In terms of tissue distribution, detected at 12.5 dpc in all tissues examined with the highest level observed in adult brain and spleen. Detected in the dental epithelium.

It localises to the golgi apparatus. The protein localises to the golgi apparatus membrane. The enzyme catalyses 3-O-(alpha-L-fucosyl)-L-threonyl-[EGF-like domain protein] + UDP-N-acetyl-alpha-D-glucosamine = 3-O-(N-acetyl-beta-D-glucosaminyl-(1-&gt;3)-alpha-L-fucosyl)-L-threonyl-[EGF-like domain protein] + UDP + H(+). The catalysed reaction is 3-O-(alpha-L-fucosyl)-L-seryl-[EGF-like domain protein] + UDP-N-acetyl-alpha-D-glucosamine = 3-O-(N-acetyl-beta-D-glucosaminyl-(1-&gt;3)-alpha-L-fucosyl)-L-seryl-[EGF-like domain protein] + UDP + H(+). Glycosyltransferase that initiates the elongation of O-linked fucose residues attached to EGF-like repeats in the extracellular domain of Notch molecules. Modulates NOTCH1 activity by modifying O-fucose residues at specific EGF-like domains resulting in inhibition of NOTCH1 activation by JAG1 and enhancement of NOTCH1 activation by DLL1 via an increase in its binding to DLL1. Decreases the binding of JAG1 to NOTCH2 but not that of DLL1. Essential mediator of somite segmentation and patterning. During somite boundary formation, it restricts Notch activity in the presomitic mesoderm to a boundary-forming territory in the posterior half of the prospective somite. In this region, Notch function activates a set of genes that are involved in boundary formation and in anterior-posterior somite identity. Ectopically expressed in the thymus, Lfgn inhibits Notch signaling which results in inhibition of T-cell commitment and promotes B-cell development in lymphoid progenitors. May play a role in boundary formation of the enamel knot. The sequence is that of Beta-1,3-N-acetylglucosaminyltransferase lunatic fringe from Mus musculus (Mouse).